Here is a 238-residue protein sequence, read N- to C-terminus: Uridylate kinase (238 aa).

Residue 12–15 (KLSG) coordinates ATP. The involved in allosteric activation by GTP stretch occupies residues 20–25 (GDEGFG). Gly54 serves as a coordination point for UMP. Residues Gly55 and Arg59 each contribute to the ATP site. Residues Asp74 and 135–142 (TGSPFFTT) contribute to the UMP site. 3 residues coordinate ATP: Thr162, Tyr168, and Asp171.

Belongs to the UMP kinase family. Homohexamer.

Its subcellular location is the cytoplasm. It catalyses the reaction UMP + ATP = UDP + ADP. The protein operates within pyrimidine metabolism; CTP biosynthesis via de novo pathway; UDP from UMP (UMPK route): step 1/1. With respect to regulation, allosterically activated by GTP. Inhibited by UTP. Functionally, catalyzes the reversible phosphorylation of UMP to UDP. The sequence is that of Uridylate kinase from Histophilus somni (strain 129Pt) (Haemophilus somnus).